A 429-amino-acid chain; its full sequence is MIELDINASDKSLSHRAVIFSLLAQKPCFVRNFLMGEDCLSSLEIAQNLGAKVENTAKNSFKITPPTAIKEPNKILNCNNSGTSMRLYSGLLSAQKGLFVLSGDNSLNARPMKRIIEPLKAFGAKILGREDNHFAPLAILGSPLKACDYESPIASAQVKSAFILSALQAQGISAYKENELSRNHTEIMLKSLGADIQNQNGVLMISPLEKPLEAFDFTIANDPSSAFFFALACAITPKSRLLLKNVLLNPTRIEAFEVLKKMGASIEYAIQSKDLEIIGDIYIEHAPLKAISIDQNIASLIDEIPALSIAMLFAKGKSMVKNAKDLRSKESDRIKAVVSNLKALGIECEEFEDGFYIEGLEDISPLKQHLSQKKPPLIQSFNDHRIAMSFAILTLALPLEIDNLECANISFPQFKRLLNQFKKGSFNGN.

Lys-11, Ser-12, and Arg-16 together coordinate 3-phosphoshikimate. Lys-11 lines the phosphoenolpyruvate pocket. Phosphoenolpyruvate is bound by residues Gly-82 and Arg-110. 4 residues coordinate 3-phosphoshikimate: Ser-155, Gln-157, Asp-302, and Lys-329. Gln-157 provides a ligand contact to phosphoenolpyruvate. The active-site Proton acceptor is Asp-302. Arg-333 and Arg-385 together coordinate phosphoenolpyruvate.

This sequence belongs to the EPSP synthase family. In terms of assembly, monomer.

The protein localises to the cytoplasm. It catalyses the reaction 3-phosphoshikimate + phosphoenolpyruvate = 5-O-(1-carboxyvinyl)-3-phosphoshikimate + phosphate. It participates in metabolic intermediate biosynthesis; chorismate biosynthesis; chorismate from D-erythrose 4-phosphate and phosphoenolpyruvate: step 6/7. Catalyzes the transfer of the enolpyruvyl moiety of phosphoenolpyruvate (PEP) to the 5-hydroxyl of shikimate-3-phosphate (S3P) to produce enolpyruvyl shikimate-3-phosphate and inorganic phosphate. This is 3-phosphoshikimate 1-carboxyvinyltransferase from Helicobacter pylori (strain G27).